The chain runs to 389 residues: MVSVSEIRKAQRAEGPATILAIGTATPANCVEQSTYPDFYFKITNSEHKTVLKEKFQRMCDKSMIKRRYMYLTEEILKENPSLCEYMAPSLDARQDMVVVEVPRLGKEAAVKAIKEWGQPKSKITHLIFCTTSGVDMPGADYQLTKLLGLRPYVKRYMMYQQGCFAGGTVLRLAKDLAENNKGARVLVVCSEVTAVTFRGPSDTHLDSLVGQALFGDGAAALIVGSDPLPEIEKPIFEMVWTAQTIAPDSEGAIDGHLREAGLTFHLLKDVPGIVSKNINKALVEAFQPLNIDDYNSIFWIAHPGGPAILDQVEEKLGLKPEKMKATREVLSEYGNMSSACVLFILDEMRKKSAQQGLKTTGEGLDWGVLFGFGPGLTIETVVLHSVAI.

The active site involves Cys-164.

This sequence belongs to the thiolase-like superfamily. Chalcone/stilbene synthases family.

It catalyses the reaction (E)-4-coumaroyl-CoA + 3 malonyl-CoA + 3 H(+) = 2',4,4',6'-tetrahydroxychalcone + 3 CO2 + 4 CoA. It functions in the pathway secondary metabolite biosynthesis; flavonoid biosynthesis. Its function is as follows. The primary product of this enzyme is 4,2',4',6'-tetrahydroxychalcone (also termed naringenin-chalcone or chalcone) which can under specific conditions spontaneously isomerize into naringenin. This chain is Chalcone synthase 6 (CHS6), found in Pisum sativum (Garden pea).